Here is a 357-residue protein sequence, read N- to C-terminus: UPF0283 membrane protein BCAN_A1047 (357 aa).

The interval 1 to 36 (MSDKTPRKPTAFRLEQPARVSAASEQEEPRRPRAVK) is disordered. Over residues 27–36 (EEPRRPRAVK) the composition is skewed to basic and acidic residues. 2 helical membrane passes run 78-98 (ILFG…TEDL) and 109-129 (LGWT…AIIL).

It belongs to the UPF0283 family.

Its subcellular location is the cell inner membrane. This chain is UPF0283 membrane protein BCAN_A1047, found in Brucella canis (strain ATCC 23365 / NCTC 10854 / RM-666).